We begin with the raw amino-acid sequence, 2495 residues long: MAEPPKTPGRPVCVVFGPQSSEIDETLFYISRNIDENPSLGFLKDVLQELPSLWSPITDAWSSLSSIPGATQLTVLAECVQGTTAAPKSAMNVFMTPLTVIRQIIDVWKFKEESQNRCRIVDAQGFCVGFLAAVAVASSNDSNEFEDIASTMIRLAVCIGAAVDLDGILHGPARSVALRWKSDSEKEQLDRVLGSSSTAYISCFTDATSVTVTVAEDEVDDLTKELGGHGLSVKIIDLKGRFHHSRHVTAVQYLADLCETDARFRLARTSPCVLPLRSNVDGHVIGKRFAIHKTALESILTKPSQWAITVSAAFEQARETDDDLAFVVIGTGQFVPRLVRTRVLDHLNNKWSDTKQHAILPNGIHRSSSTTRSRPSIDMAPIGPTVIPIAITGMGCRYAQADSPEQLWEMLELGRCGVNALPNERFKMENLLREPKGPFWGNYLANPDVFDHRFFGISAREAEAMDPQQRLLLQVGYEAMESAGYCGLRTSNIPTDVGCYVGVGSDDYTDNVGSSNANAFSATGTLQAFCTGRLSHYFGWTGPSVVVDTACSSAAVSIHLACKALQTNECSIAVAGGVNVMTSPRVTQNLAAASFLSPTGASKAFDASADGYCRGEGAGLVVLRPLKDAIHNGDPILAIIGGSAVNQGSNRSPITVPDSDSQISLYRKALVTSGVRPEDVTYVEAHGTGTQVGDPIEFESIRKTFGRPARTERLYVGSVKDNIGHTETSSGVAGLLKTVLMMQKHQIPKQANFVQLNPKIPTLDDAAIAIPTKSIHWPSAANSSSTAVAMVTNYGAAGSNAALVVKQYKAKSGLSNPVSPLPSEVPVILAANTVESLRSYCKALLSSVCDAQLTSCQDTAYNLAIKQSRDMDYVSAFSIPVDRPNELIAKLESISRETTNLEKQPAARLPVVLCFGGQNGNEATISEDLFNQCELLQYHLTECEKVCQTLDLPSLFPSIFQPGPIEDTVSLHCILFSIQYASAKSWIDSGLQVDRIIGHSFGQLTGLCVGGGLSLSDALYLVSERAKMIHSMWGSERGAMLLVEGSEVEVQGLLNRAAEHMADVAVDVACVNGPRNTILAGDERSLQMIEKLSAKAPSILRTKRLKNTHAFHSRLVDNIVPPLTKVAQQLQYKPLSIPIEACSQYDDWTYVTPGKIVDHSRRRVDFQTAVERVAQRIQGPAIWLEAGSASPIIPLVRRVIDTVAAFSNGHVYQALDLGGALAHRSLSQATCNLWSRGVKVQFWQFHDSQAKSYNWINLPPYQFAQTRHWIGYDPNAFASLPEVKPTVPSSDAPKEFVQLLTKQPTECVFAINTNDPLYQECTQGHAVLDQNLCPASLYFEIIVRAAGLIRPENDISPAMPHLKDLAISAPLVLNPRGNVMLSLTRARVGDSTWSFSLFTRESNKNKVTTHATGEISLHPFGQNTPLFVRLHSMNRLIDSSRVDSIANSRESSGLKGFAVYQAFRRVVNYADYYRGVEQVFATDHEAAGIVNLPSSRTKDASCDPMLVDNFIQVAGIHVNCLSETKEDEVFVCTGVGEILIGEAFMTRDPNCSRSWAVYSNVDRSIKNKITCDTFVLDRETDKLAVTILSATFTSVSIAGLSRVLKKLNNQPDDKKVPLGQSLRDDSKVALNPTPQNALAAVPAPLHSAPDSGHFMVVQEMLCDLLGIASDELLPSSNLEDIGVDSLMRTEVLVEIKKRFNFTIDTSSFVEIPDILTLVQTIFPDAATAPLTNGVHPSLQIETTEAVDSESNTHVIPTPISDEEIHGLIDIAPGLFTDIQRSMVHSQSTQWDGFCESVYPRQMALVTAYVVEAFKSLGVSLESFEAEHLIPQVPVLQQHSKVRSQLYSILQFSNLIRATDHGFVRTSVPVSTISSDVLHEEIIRLYPQHTSEHNLLRTTGSRLSDCLSGAADPLSLLFQDAEARRLMEDVYTNAPMFKAATNHLAQYLVNLLGRVDTTREIKILEIGGGTGGTTKALLSQLTAVPGLRFQYTFTDLSSGLLALARKKFKHYSFMKYQVLNIERAPTPDMLGQYDIVLSSNCVHATRSLVQSCSNINKLLRPDGLLCLIELTRNLFWFDLVFGLLEGWWLFEDGRQHALATEHVWKQTLSQSGFQWVDWTYNDSQESNVLRVITASPTSAVILPPSPRSPLYLMNEETIVYGKNDGVELSADIYYPRDLQPIGKPRPIALLIHGGGHIMLSRRDIRSKQVRMLLNAGFLPVSVDYRLCPEVSLTEGPMHDVCDALCWARHVLPSLTLGRPDIQPDGTQAVAVGWSTGAHLAMTLAWTSQQRGIAPPNAILAFYGPTDYEDSFWSQPNFPYGKNAASPEMRYDLWEGIYETPITAYNPPVDQKALGGWMSPADPRSRIALHMNWKGQSLPMLLHGGRFWSDHKDGDCGEELPVPTLEEIQAVSPLAQIRNGHYKTPTFIIHGTLDDLIPVEQAQRTSQELVTKGVEVQLRVVDKAVHLFDIYPGFEKDQAASRAVEDGYEFLRDHVRY.

An N-terminal acylcarrier protein transacylase domain (SAT) region spans residues 14 to 252; the sequence is VVFGPQSSEI…HHSRHVTAVQ (239 aa). The 422-residue stretch at 386-807 folds into the Ketosynthase family 3 (KS3) domain; sequence VIPIAITGMG…GSNAALVVKQ (422 aa). Catalysis depends on for beta-ketoacyl synthase activity residues cysteine 551, histidine 686, and histidine 725. The interval 913-1222 is malonyl-CoA:ACP transacylase (MAT) domain; the sequence is LCFGGQNGNE…QALDLGGALA (310 aa). The active-site For acyl/malonyl transferase activity is the serine 1000. The tract at residues 1294 to 1422 is N-terminal hotdog fold; that stretch reads KEFVQLLTKQ…GEISLHPFGQ (129 aa). Residues 1294–1601 enclose the PKS/mFAS DH domain; sequence KEFVQLLTKQ…FTSVSIAGLS (308 aa). Positions 1295–1600 are product template (PT) domain; it reads EFVQLLTKQP…TFTSVSIAGL (306 aa). Histidine 1325 functions as the Proton acceptor; for dehydratase activity in the catalytic mechanism. Residues 1450–1601 are C-terminal hotdog fold; sequence ESSGLKGFAV…FTSVSIAGLS (152 aa). The active-site Proton donor; for dehydratase activity is aspartate 1508. A Carrier domain is found at 1651–1725; that stretch reads SGHFMVVQEM…TLVQTIFPDA (75 aa). O-(pantetheine 4'-phosphoryl)serine is present on serine 1685. A methyltransferase (CMeT) domain region spans residues 1887-2120; the sequence is QHTSEHNLLR…GFQWVDWTYN (234 aa). The interval 2150-2495 is thioesterase (TE) domain; the sequence is YLMNEETIVY…YEFLRDHVRY (346 aa). Active-site for thioesterase activity residues include serine 2273 and aspartate 2432.

The catalysed reaction is 3 malonyl-CoA + acetyl-CoA + 2 S-adenosyl-L-methionine = 3,5-dimethylorsellinate + 2 S-adenosyl-L-homocysteine + 3 CO2 + 4 CoA. It participates in secondary metabolite biosynthesis; terpenoid biosynthesis. Its function is as follows. Non-reducing polyketide synthase; part of the gene cluster that mediates the biosynthesis of andrastins, meroterpenoid compounds that exhibit inhibitory activity against ras farnesyltransferase, suggesting that they could be promising leads for antitumor agents. The first step of the pathway is the synthesis of 3,5-dimethylorsellinic acid (DMOA) by the polyketide synthase adrD via condensation of one acetyl-CoA starter unit with 3 malonyl-CoA units and 2 methylations. DMAO is then converted to farnesyl-DMAO by the prenyltransferase adrG. The methyltransferase adrK catalyzes the methylation of the carboxyl group of farnesyl-DMAO to farnesyl-DMAO methyl ester which is further converted to epoxyfarnesyl-DMAO methyl ester by the FAD-dependent monooxygenase adrH. The terpene cyclase adrI then catalyzes the carbon skeletal rearrangement to generate the andrastin E, the first compound in the pathway having the andrastin scaffold, with the tetracyclic ring system. The post-cyclization tailoring enzymes adrF, adrE, adrJ, and adrA, are involved in the conversion of andrastin E into andrastin A. The short chain dehydrogenase adrF is responsible for the oxidation of the C-3 a hydroxyl group of andrastin E to yield the corresponding ketone, andrastin D. The ketoreductase adrE stereoselectively reduces the carbonyl moiety to reverse the stereochemistry of the C-3 position to yield andrastin F. The acetyltransferase adrJ is the acetyltransferase that attaches the acetyl group to the C-3 hydroxyl group of andrastin F to yield andrastin C. Finally, the cytochrome P450 monooxygenase adrA catalyzes two sequential oxidation reactions of the C-23 methyl group, to generate the corresponding alcohol andrastin B, and aldehyde andrastin A. In Penicillium roqueforti, this protein is Non-reducing polyketide synthase adrD.